A 273-amino-acid polypeptide reads, in one-letter code: 4-hydroxy-tetrahydrodipicolinate reductase (273 aa).

Residue 12 to 17 (GANGRM) participates in NAD(+) binding. Position 39 (arginine 39) interacts with NADP(+). Residues 102 to 104 (GTT) and 126 to 129 (AANF) contribute to the NAD(+) site. The Proton donor/acceptor role is filled by histidine 159. Residue histidine 160 coordinates (S)-2,3,4,5-tetrahydrodipicolinate. Residue lysine 163 is the Proton donor of the active site. Position 169-170 (169-170 (GT)) interacts with (S)-2,3,4,5-tetrahydrodipicolinate.

Belongs to the DapB family. As to quaternary structure, homotetramer.

Its subcellular location is the cytoplasm. It catalyses the reaction (S)-2,3,4,5-tetrahydrodipicolinate + NAD(+) + H2O = (2S,4S)-4-hydroxy-2,3,4,5-tetrahydrodipicolinate + NADH + H(+). The catalysed reaction is (S)-2,3,4,5-tetrahydrodipicolinate + NADP(+) + H2O = (2S,4S)-4-hydroxy-2,3,4,5-tetrahydrodipicolinate + NADPH + H(+). It participates in amino-acid biosynthesis; L-lysine biosynthesis via DAP pathway; (S)-tetrahydrodipicolinate from L-aspartate: step 4/4. Functionally, catalyzes the conversion of 4-hydroxy-tetrahydrodipicolinate (HTPA) to tetrahydrodipicolinate. The chain is 4-hydroxy-tetrahydrodipicolinate reductase from Cronobacter sakazakii (strain ATCC BAA-894) (Enterobacter sakazakii).